A 67-amino-acid polypeptide reads, in one-letter code: Putative sodium channel alpha-toxin Acra7 (67 aa).

Residues 2-66 form the LCN-type CS-alpha/beta domain; it reads RDGYIVKPTN…PIKDPNQDCT (65 aa). 4 disulfide bridges follow: Cys-12–Cys-65, Cys-16–Cys-37, Cys-23–Cys-47, and Cys-27–Cys-49. Arg-67 is a propeptide (removed by a carboxypeptidase).

Belongs to the long (4 C-C) scorpion toxin superfamily. Sodium channel inhibitor family. Alpha subfamily. In terms of tissue distribution, expressed by the venom gland.

The protein localises to the secreted. Its function is as follows. Alpha toxins bind voltage-independently at site-3 of sodium channels (Nav) and inhibit the inactivation of the activated channels, thereby blocking neuronal transmission. The chain is Putative sodium channel alpha-toxin Acra7 from Androctonus crassicauda (Arabian fat-tailed scorpion).